A 315-amino-acid polypeptide reads, in one-letter code: Olfactory receptor 5M10 (315 aa).

The Extracellular segment spans residues 1-25 (MLSPNHTIVTEFILLGLTDDPVLEK). Residue N5 is glycosylated (N-linked (GlcNAc...) asparagine). The helical transmembrane segment at 26 to 46 (ILFGVFLAIYLITLAGNLCMI) threads the bilayer. Residues 47 to 54 (LLIRTNSQ) lie on the Cytoplasmic side of the membrane. A helical transmembrane segment spans residues 55–75 (LQTPMYFFLGHLSFVDICYSS). The Extracellular portion of the chain corresponds to 76–99 (NVTPNMLHNFLSEQKTISYAGCFT). An intrachain disulfide couples C97 to C189. The helical transmembrane segment at 100–120 (QCLLFIALVITEFYFLASMAL) threads the bilayer. Residues 121-139 (DRYVAICSPLHYSSRMSKN) are Cytoplasmic-facing. Residues 140-160 (ICISLVTVPYMYGFLNGLSQT) traverse the membrane as a helical segment. Over 161-196 (LLTFHLSFCGSLEINHFYCADPPLIMLACSDTRVKK) the chain is Extracellular. Residues 197–217 (MAMFVVAGFTLSSSLFIILLS) form a helical membrane-spanning segment. Over 218-237 (YLFIFAAIFRIRSAEGRHKA) the chain is Cytoplasmic. Residues 238–258 (FSTCASHLTIVTLFYGTLFCM) traverse the membrane as a helical segment. At 259–271 (YVRPPSEKSVEES) the chain is on the extracellular side. A helical membrane pass occupies residues 272–292 (KIIAVFYTFLSPMLNPLIYSL). The Cytoplasmic segment spans residues 293-315 (RNRDVILAIQQMIRGKSFCKIAV).

It belongs to the G-protein coupled receptor 1 family.

The protein resides in the cell membrane. Odorant receptor. The polypeptide is Olfactory receptor 5M10 (OR5M10) (Homo sapiens (Human)).